We begin with the raw amino-acid sequence, 510 residues long: D-alanine--D-alanyl carrier protein ligase (510 aa).

157-158 (TS) is a binding site for ATP. Residue aspartate 202 participates in D-alanine binding. 297–302 (NTYGPT) contacts ATP. Residue valine 306 coordinates D-alanine. ATP-binding residues include aspartate 389 and lysine 498. Lysine 498 is a D-alanine binding site.

The protein belongs to the ATP-dependent AMP-binding enzyme family. DltA subfamily.

Its subcellular location is the cytoplasm. It carries out the reaction holo-[D-alanyl-carrier protein] + D-alanine + ATP = D-alanyl-[D-alanyl-carrier protein] + AMP + diphosphate. It participates in cell wall biogenesis; lipoteichoic acid biosynthesis. In terms of biological role, catalyzes the first step in the D-alanylation of lipoteichoic acid (LTA), the activation of D-alanine and its transfer onto the D-alanyl carrier protein (Dcp) DltC. In an ATP-dependent two-step reaction, forms a high energy D-alanyl-AMP intermediate, followed by transfer of the D-alanyl residue as a thiol ester to the phosphopantheinyl prosthetic group of the Dcp. D-alanylation of LTA plays an important role in modulating the properties of the cell wall in Gram-positive bacteria, influencing the net charge of the cell wall. The polypeptide is D-alanine--D-alanyl carrier protein ligase (Listeria innocua serovar 6a (strain ATCC BAA-680 / CLIP 11262)).